A 515-amino-acid polypeptide reads, in one-letter code: MLTPYKHEPFTDFSVEENRSAFEAALKNVEGELGKDYPLVINGERVTTDDKIVSVNPAMKEQVIGVVSKASREIVDDAFKSAETAFHTWKNVNPEERANILIRAAAIIRRRKHEFSAWLVKEAGKPWKEADADTAEAIDFLEYYARQMITLKDGKPVNSREGEHNRYFYTPIGVCVTISPWNFALAIMAGTTVAPIVTGNTVLLKPASTTPVVAAKFVEVLEEAGLPKGVVNFVPGSGTDIGDYLIDHPKTSLITFTGSRDVGVRLYERAAVVHPGQQHLKRVIVEMGGKDTVVVDKDADLDLAAQSIVTSAFGFSGQKCSAGSRAVIHQDVYDVVLEKAVALTKQLSVGEPTAPDVYMGPVVDQGAFSKIMSYIEVGKEEGRLMVGGEGDDSKGFFIQPTIFADVDPHARIMQEEIFGPVVAFSKARDFDHALEIANNTEYGLTGAVITTNRHHIEKAKRDFHVGNLYFNRNCTGAIVGYHPFGGFKMSGTDSKAGGPDYLALHMQAKTVSEMY.

Active-site residues include Glu286 and Cys320.

It belongs to the aldehyde dehydrogenase family. RocA subfamily.

The enzyme catalyses L-glutamate 5-semialdehyde + NAD(+) + H2O = L-glutamate + NADH + 2 H(+). The protein operates within amino-acid degradation; L-proline degradation into L-glutamate; L-glutamate from L-proline: step 2/2. The chain is 1-pyrroline-5-carboxylate dehydrogenase 2 (rocA2) from Halalkalibacterium halodurans (strain ATCC BAA-125 / DSM 18197 / FERM 7344 / JCM 9153 / C-125) (Bacillus halodurans).